Reading from the N-terminus, the 143-residue chain is Ribosome-binding factor A (143 aa).

The disordered stretch occupies residues 117–143 (DAEIARRSQGAMPAGEADPYRHSDEEE). The segment covering 134 to 143 (DPYRHSDEEE) has biased composition (basic and acidic residues).

This sequence belongs to the RbfA family. In terms of assembly, monomer. Binds 30S ribosomal subunits, but not 50S ribosomal subunits or 70S ribosomes.

It is found in the cytoplasm. In terms of biological role, one of several proteins that assist in the late maturation steps of the functional core of the 30S ribosomal subunit. Associates with free 30S ribosomal subunits (but not with 30S subunits that are part of 70S ribosomes or polysomes). Required for efficient processing of 16S rRNA. May interact with the 5'-terminal helix region of 16S rRNA. In Cutibacterium acnes (strain DSM 16379 / KPA171202) (Propionibacterium acnes), this protein is Ribosome-binding factor A.